Here is a 562-residue protein sequence, read N- to C-terminus: Probable Xaa-Pro aminopeptidase PEPP (562 aa).

Mn(2+)-binding residues include D358, D369, E492, and E532.

Belongs to the peptidase M24B family. Mn(2+) is required as a cofactor.

It carries out the reaction Release of any N-terminal amino acid, including proline, that is linked to proline, even from a dipeptide or tripeptide.. Catalyzes the removal of a penultimate prolyl residue from the N-termini of peptides. The chain is Probable Xaa-Pro aminopeptidase PEPP (PEPP) from Leptosphaeria maculans (strain JN3 / isolate v23.1.3 / race Av1-4-5-6-7-8) (Blackleg fungus).